Consider the following 486-residue polypeptide: Hydrogenobyrinate a,c-diamide synthase (486 aa).

Residues 254–272 show a composition bias toward pro residues; the sequence is SPPPPLPVPSPGAAPPDPL. Residues 254–284 form a disordered region; sequence SPPPPLPVPSPGAAPPDPLVRPGRPRPQAPD. The region spanning 289–474 is the GATase cobBQ-type domain; it reads RVAMASGAAF…LHTHWAAEPG (186 aa). C372 functions as the Nucleophile in the catalytic mechanism.

This sequence belongs to the CobB/CbiA family. Requires Mg(2+) as cofactor.

It catalyses the reaction hydrogenobyrinate + 2 L-glutamine + 2 ATP + 2 H2O = hydrogenobyrinate a,c-diamide + 2 L-glutamate + 2 ADP + 2 phosphate + 2 H(+). It functions in the pathway cofactor biosynthesis; adenosylcobalamin biosynthesis; cob(II)yrinate a,c-diamide from precorrin-2 (aerobic route): step 9/10. Its function is as follows. Catalyzes the ATP-dependent amidation of the two carboxylate groups at positions a and c of hydrogenobyrinate, using either L-glutamine or ammonia as the nitrogen source. The polypeptide is Hydrogenobyrinate a,c-diamide synthase (Streptomyces coelicolor (strain ATCC BAA-471 / A3(2) / M145)).